The following is a 265-amino-acid chain: 4-diphosphocytidyl-2-C-methyl-D-erythritol kinase (265 aa).

Lysine 8 is an active-site residue. Residue 95 to 105 (PIGAGLGGGSS) coordinates ATP. Aspartate 135 is a catalytic residue.

This sequence belongs to the GHMP kinase family. IspE subfamily.

It carries out the reaction 4-CDP-2-C-methyl-D-erythritol + ATP = 4-CDP-2-C-methyl-D-erythritol 2-phosphate + ADP + H(+). The protein operates within isoprenoid biosynthesis; isopentenyl diphosphate biosynthesis via DXP pathway; isopentenyl diphosphate from 1-deoxy-D-xylulose 5-phosphate: step 3/6. In terms of biological role, catalyzes the phosphorylation of the position 2 hydroxy group of 4-diphosphocytidyl-2C-methyl-D-erythritol. This Ureaplasma parvum serovar 3 (strain ATCC 27815 / 27 / NCTC 11736) protein is 4-diphosphocytidyl-2-C-methyl-D-erythritol kinase.